The primary structure comprises 405 residues: Phosphopentomutase (405 aa).

Positions 10, 303, 308, 344, 345, and 356 each coordinate Mn(2+).

It belongs to the phosphopentomutase family. The cofactor is Mn(2+).

It localises to the cytoplasm. The catalysed reaction is 2-deoxy-alpha-D-ribose 1-phosphate = 2-deoxy-D-ribose 5-phosphate. The enzyme catalyses alpha-D-ribose 1-phosphate = D-ribose 5-phosphate. The protein operates within carbohydrate degradation; 2-deoxy-D-ribose 1-phosphate degradation; D-glyceraldehyde 3-phosphate and acetaldehyde from 2-deoxy-alpha-D-ribose 1-phosphate: step 1/2. Functionally, isomerase that catalyzes the conversion of deoxy-ribose 1-phosphate (dRib-1-P) and ribose 1-phosphate (Rib-1-P) to deoxy-ribose 5-phosphate (dRib-5-P) and ribose 5-phosphate (Rib-5-P), respectively. This is Phosphopentomutase from Shewanella sediminis (strain HAW-EB3).